A 228-amino-acid polypeptide reads, in one-letter code: Sec-independent protein translocase protein TatB (228 aa).

The helical transmembrane segment at 1–21 (MFDFGLGELVFVGIIALIVLG) threads the bilayer. Disordered stretches follow at residues 126-162 (LSDGISDVMPSERSDTSAEILGDSGQTGSTAEPAETD) and 196-228 (VPHTTSLRKQAISRKRGLRPKHRAKPKLRVRKS). Residues 206–228 (AISRKRGLRPKHRAKPKLRVRKS) are compositionally biased toward basic residues.

Belongs to the TatB family. In terms of assembly, the Tat system comprises two distinct complexes: a TatABC complex, containing multiple copies of TatA, TatB and TatC subunits, and a separate TatA complex, containing only TatA subunits. Substrates initially bind to the TatABC complex, which probably triggers association of the separate TatA complex to form the active translocon.

The protein localises to the cell inner membrane. In terms of biological role, part of the twin-arginine translocation (Tat) system that transports large folded proteins containing a characteristic twin-arginine motif in their signal peptide across membranes. Together with TatC, TatB is part of a receptor directly interacting with Tat signal peptides. TatB may form an oligomeric binding site that transiently accommodates folded Tat precursor proteins before their translocation. The chain is Sec-independent protein translocase protein TatB from Neisseria meningitidis serogroup C / serotype 2a (strain ATCC 700532 / DSM 15464 / FAM18).